The primary structure comprises 149 residues: D-aminoacyl-tRNA deacylase (149 aa).

The short motif at 137–138 (GP) is the Gly-cisPro motif, important for rejection of L-amino acids element.

Belongs to the DTD family. As to quaternary structure, homodimer.

It localises to the cytoplasm. It carries out the reaction glycyl-tRNA(Ala) + H2O = tRNA(Ala) + glycine + H(+). The enzyme catalyses a D-aminoacyl-tRNA + H2O = a tRNA + a D-alpha-amino acid + H(+). An aminoacyl-tRNA editing enzyme that deacylates mischarged D-aminoacyl-tRNAs. Also deacylates mischarged glycyl-tRNA(Ala), protecting cells against glycine mischarging by AlaRS. Acts via tRNA-based rather than protein-based catalysis; rejects L-amino acids rather than detecting D-amino acids in the active site. By recycling D-aminoacyl-tRNA to D-amino acids and free tRNA molecules, this enzyme counteracts the toxicity associated with the formation of D-aminoacyl-tRNA entities in vivo and helps enforce protein L-homochirality. The chain is D-aminoacyl-tRNA deacylase from Caldicellulosiruptor saccharolyticus (strain ATCC 43494 / DSM 8903 / Tp8T 6331).